The primary structure comprises 219 residues: Octanoyltransferase (219 aa).

The region spanning Ala-32 to Gln-207 is the BPL/LPL catalytic domain. Substrate-binding positions include Arg-71–His-78, Ser-138–Gly-140, and Gly-151–Ala-153. Residue Cys-169 is the Acyl-thioester intermediate of the active site.

Belongs to the LipB family.

The protein localises to the cytoplasm. It catalyses the reaction octanoyl-[ACP] + L-lysyl-[protein] = N(6)-octanoyl-L-lysyl-[protein] + holo-[ACP] + H(+). Its pathway is protein modification; protein lipoylation via endogenous pathway; protein N(6)-(lipoyl)lysine from octanoyl-[acyl-carrier-protein]: step 1/2. Catalyzes the transfer of endogenously produced octanoic acid from octanoyl-acyl-carrier-protein onto the lipoyl domains of lipoate-dependent enzymes. Lipoyl-ACP can also act as a substrate although octanoyl-ACP is likely to be the physiological substrate. This Stutzerimonas stutzeri (strain A1501) (Pseudomonas stutzeri) protein is Octanoyltransferase.